The sequence spans 543 residues: Protein pbn1 (543 aa).

At 1-503 the chain is on the lumenal side; that stretch reads MRRRITFVQR…KGFFQSKAIE (503 aa). N-linked (GlcNAc...) asparagine glycosylation is present at N409. A helical membrane pass occupies residues 504–524; it reads LGTMIVIGLGSLWVLWKLGAI. The Cytoplasmic segment spans residues 525-543; sequence AWSSGTRPQRKSTKQKKSE.

Belongs to the PIGX family.

It is found in the endoplasmic reticulum membrane. It functions in the pathway glycolipid biosynthesis; glycosylphosphatidylinositol-anchor biosynthesis. Required for proper folding and/or the stability of a subset of proteins in the endoplasmic reticulum. Component of glycosylphosphatidylinositol-mannosyltransferase 1 which transfers the first of the 4 mannoses in the GPI-anchor precursors during GPI-anchor biosynthesis. Probably acts by stabilizing the mannosyltransferase gpi14. This is Protein pbn1 (pbn1) from Aspergillus oryzae (strain ATCC 42149 / RIB 40) (Yellow koji mold).